Consider the following 154-residue polypeptide: 6,7-dimethyl-8-ribityllumazine synthase (154 aa).

5-amino-6-(D-ribitylamino)uracil is bound by residues F22, A56–E58, and T80–I82. A85–T86 serves as a coordination point for (2S)-2-hydroxy-3-oxobutyl phosphate. H88 functions as the Proton donor in the catalytic mechanism. F113 contacts 5-amino-6-(D-ribitylamino)uracil. R127 serves as a coordination point for (2S)-2-hydroxy-3-oxobutyl phosphate.

Belongs to the DMRL synthase family. As to quaternary structure, forms an icosahedral capsid composed of 60 subunits, arranged as a dodecamer of pentamers.

The enzyme catalyses (2S)-2-hydroxy-3-oxobutyl phosphate + 5-amino-6-(D-ribitylamino)uracil = 6,7-dimethyl-8-(1-D-ribityl)lumazine + phosphate + 2 H2O + H(+). It functions in the pathway cofactor biosynthesis; riboflavin biosynthesis; riboflavin from 2-hydroxy-3-oxobutyl phosphate and 5-amino-6-(D-ribitylamino)uracil: step 1/2. Its function is as follows. Catalyzes the formation of 6,7-dimethyl-8-ribityllumazine by condensation of 5-amino-6-(D-ribitylamino)uracil with 3,4-dihydroxy-2-butanone 4-phosphate. This is the penultimate step in the biosynthesis of riboflavin. This is 6,7-dimethyl-8-ribityllumazine synthase from Bacillus pumilus (strain SAFR-032).